Consider the following 390-residue polypeptide: Phosphopentomutase (390 aa).

Mn(2+) contacts are provided by Asp12, Asp284, His289, Asp325, His326, and His337.

Belongs to the phosphopentomutase family. Mn(2+) serves as cofactor.

It is found in the cytoplasm. The catalysed reaction is 2-deoxy-alpha-D-ribose 1-phosphate = 2-deoxy-D-ribose 5-phosphate. The enzyme catalyses alpha-D-ribose 1-phosphate = D-ribose 5-phosphate. It participates in carbohydrate degradation; 2-deoxy-D-ribose 1-phosphate degradation; D-glyceraldehyde 3-phosphate and acetaldehyde from 2-deoxy-alpha-D-ribose 1-phosphate: step 1/2. In terms of biological role, isomerase that catalyzes the conversion of deoxy-ribose 1-phosphate (dRib-1-P) and ribose 1-phosphate (Rib-1-P) to deoxy-ribose 5-phosphate (dRib-5-P) and ribose 5-phosphate (Rib-5-P), respectively. The chain is Phosphopentomutase from Macrococcus caseolyticus (strain JCSC5402) (Macrococcoides caseolyticum).